Consider the following 279-residue polypeptide: NH(3)-dependent NAD(+) synthetase (279 aa).

An ATP-binding site is contributed by 40 to 47 (GLSGGIDS). Position 46 (aspartate 46) interacts with Mg(2+). Arginine 122 contacts deamido-NAD(+). Threonine 142 lines the ATP pocket. Position 147 (glutamate 147) interacts with Mg(2+). Positions 155 and 162 each coordinate deamido-NAD(+). Residues lysine 171 and serine 193 each coordinate ATP. Position 253–254 (253–254 (HK)) interacts with deamido-NAD(+).

It belongs to the NAD synthetase family. Homodimer.

The catalysed reaction is deamido-NAD(+) + NH4(+) + ATP = AMP + diphosphate + NAD(+) + H(+). The protein operates within cofactor biosynthesis; NAD(+) biosynthesis; NAD(+) from deamido-NAD(+) (ammonia route): step 1/1. Catalyzes the ATP-dependent amidation of deamido-NAD to form NAD. Uses ammonia as a nitrogen source. The polypeptide is NH(3)-dependent NAD(+) synthetase (Sulfurisphaera tokodaii (strain DSM 16993 / JCM 10545 / NBRC 100140 / 7) (Sulfolobus tokodaii)).